Here is a 406-residue protein sequence, read N- to C-terminus: Transcriptional activator NprA (406 aa).

TPR repeat units follow at residues 125–158, 206–239, 246–279, and 285–318; these read YYYYKFLGLLYYCKEKYEDALEYYKKAEQRFRSQ, AECHILLGICYRRYGEVDQAIECYSLAHKIAQII, GTIEHNLGYLMSMKHEHYEAIQHYKKSLLYKRNS, and FITLFSLIKEYYVSKNYKKALANVEESLQLLKRE.

Activates the transcription of nprS by about five fold. May bind to the upstream region of nprS promoter. The sequence is that of Transcriptional activator NprA (nprA) from Geobacillus stearothermophilus (Bacillus stearothermophilus).